Consider the following 314-residue polypeptide: Ribosomal protein L11 methyltransferase (314 aa).

Positions 163, 184, 206, and 248 each coordinate S-adenosyl-L-methionine.

It belongs to the methyltransferase superfamily. PrmA family.

Its subcellular location is the cytoplasm. The enzyme catalyses L-lysyl-[protein] + 3 S-adenosyl-L-methionine = N(6),N(6),N(6)-trimethyl-L-lysyl-[protein] + 3 S-adenosyl-L-homocysteine + 3 H(+). Functionally, methylates ribosomal protein L11. This is Ribosomal protein L11 methyltransferase from Lactobacillus acidophilus (strain ATCC 700396 / NCK56 / N2 / NCFM).